The chain runs to 305 residues: Acetylglutamate kinase (305 aa).

Substrate contacts are provided by residues 67-68 (GG), Arg-89, and Asn-190.

It belongs to the acetylglutamate kinase family. ArgB subfamily.

Its subcellular location is the cytoplasm. It catalyses the reaction N-acetyl-L-glutamate + ATP = N-acetyl-L-glutamyl 5-phosphate + ADP. It functions in the pathway amino-acid biosynthesis; L-arginine biosynthesis; N(2)-acetyl-L-ornithine from L-glutamate: step 2/4. In terms of biological role, catalyzes the ATP-dependent phosphorylation of N-acetyl-L-glutamate. This Bifidobacterium longum subsp. infantis (strain ATCC 15697 / DSM 20088 / JCM 1222 / NCTC 11817 / S12) protein is Acetylglutamate kinase.